The chain runs to 234 residues: Small ribosomal subunit protein uS3 (234 aa).

Residues 39 to 108 (IRKFVKKKLF…TVIVNVVEVK (70 aa)) form the KH type-2 domain. A disordered region spans residues 212–234 (KGKNEETNNETADNSRGRRREAK).

It belongs to the universal ribosomal protein uS3 family. In terms of assembly, part of the 30S ribosomal subunit. Forms a tight complex with proteins S10 and S14.

In terms of biological role, binds the lower part of the 30S subunit head. Binds mRNA in the 70S ribosome, positioning it for translation. The chain is Small ribosomal subunit protein uS3 from Alkaliphilus metalliredigens (strain QYMF).